Reading from the N-terminus, the 309-residue chain is HPr kinase/phosphorylase (309 aa).

Residues H138 and K159 contribute to the active site. ATP is bound at residue 153-160 (GDSGIGKS). Residue S160 participates in Mg(2+) binding. Catalysis depends on D177, which acts as the Proton acceptor; for phosphorylation activity. Proton donor; for dephosphorylation activity. The important for the catalytic mechanism of both phosphorylation and dephosphorylation stretch occupies residues 201–210 (LEIRGVGIID). Mg(2+) is bound at residue E202. R243 is an active-site residue. The tract at residues 264 to 269 (PVKTGR) is important for the catalytic mechanism of dephosphorylation.

Belongs to the HPrK/P family. As to quaternary structure, homohexamer. It depends on Mg(2+) as a cofactor.

It carries out the reaction [HPr protein]-L-serine + ATP = [HPr protein]-O-phospho-L-serine + ADP + H(+). It catalyses the reaction [HPr protein]-O-phospho-L-serine + phosphate + H(+) = [HPr protein]-L-serine + diphosphate. Its function is as follows. Catalyzes the ATP- as well as the pyrophosphate-dependent phosphorylation of a specific serine residue in HPr, a phosphocarrier protein of the phosphoenolpyruvate-dependent sugar phosphotransferase system (PTS). HprK/P also catalyzes the pyrophosphate-producing, inorganic phosphate-dependent dephosphorylation (phosphorolysis) of seryl-phosphorylated HPr (P-Ser-HPr). The two antagonistic activities of HprK/P are regulated by several intracellular metabolites, which change their concentration in response to the absence or presence of rapidly metabolisable carbon sources (glucose, fructose, etc.) in the growth medium. Therefore, by controlling the phosphorylation state of HPr, HPrK/P is a sensor enzyme that plays a major role in the regulation of carbon metabolism and sugar transport: it mediates carbon catabolite repression (CCR), and regulates PTS-catalyzed carbohydrate uptake and inducer exclusion. The sequence is that of HPr kinase/phosphorylase from Streptococcus thermophilus (strain ATCC BAA-491 / LMD-9).